The chain runs to 509 residues: Ribonuclease Y (509 aa).

Residues 3–23 (WILYVILPAVCIILGWTIRWL) traverse the membrane as a helical segment. The KH domain occupies 199–284 (TVSTVSLPSD…EIVQKVTREI (86 aa)). Residues 325–418 (VLQHSKEVAI…VQIADAISAA (94 aa)) enclose the HD domain.

It belongs to the RNase Y family.

It is found in the cell membrane. Functionally, endoribonuclease that initiates mRNA decay. The polypeptide is Ribonuclease Y (Treponema denticola (strain ATCC 35405 / DSM 14222 / CIP 103919 / JCM 8153 / KCTC 15104)).